We begin with the raw amino-acid sequence, 739 residues long: Potassium transporter 26 (739 aa).

The Cytoplasmic portion of the chain corresponds to 1 to 81 (MEYHHRPHSP…RQVALLSFQS (81 aa)). Residues 82 to 102 (LGVVYGDLGTSPLYVFSSISL) traverse the membrane as a helical segment. At 103 to 112 (DDPGEADFVG) the chain is on the extracellular side. A helical transmembrane segment spans residues 113–133 (ILSIILWTFTMICLVKYVFIV). The Cytoplasmic segment spans residues 134–198 (LKADDHGEGG…KFLEQSTKWQ (65 aa)). A helical transmembrane segment spans residues 199 to 219 (AVITYIVLAGTCMVLGDGALT). Residues 220–236 (PAISVLSAVQGIQSRSS) are Extracellular-facing. The helical transmembrane segment at 237–257 (SITQAHVVLLSVIILFILFFF) threads the bilayer. Residues 258–268 (QKHGTSKVSFT) are Cytoplasmic-facing. A helical transmembrane segment spans residues 269–289 (FSPIMILWFTFVAFIGLYNII). Topologically, residues 290 to 318 (KHYPPILKAVSPHYIIIYFIRNKRAAWET) are extracellular. Residues 319–339 (LGAIVLCITGAEAMFADLGHF) traverse the membrane as a helical segment. Over 340 to 347 (NKSSIQMA) the chain is Cytoplasmic. A helical membrane pass occupies residues 348–368 (FSVIVYPSMILAYAGQAAFLV). The Extracellular portion of the chain corresponds to 369 to 385 (KNPSKLSTTFYSSTPEP). Residues 386–406 (LFWPMFIIATLAAIVASQALI) form a helical membrane-spanning segment. At 407–437 (SASFSIIRQSIALGCFPRVTMKHTSGKHEGQ) the chain is on the cytoplasmic side. The chain crosses the membrane as a helical span at residues 438–458 (VYSPEINYFLMVACILITVGF). The Extracellular segment spans residues 459-469 (KGGPEIGQAFG). The chain crosses the membrane as a helical span at residues 470-490 (VAVIFVMLFTTNLMTVVMLII). Topologically, residues 491–494 (WESN) are cytoplasmic. The helical transmembrane segment at 495–515 (IALASLFFVFFFSIEGIYMTS) threads the bilayer. Residues 516 to 519 (LMNK) lie on the Extracellular side of the membrane. The helical transmembrane segment at 520 to 540 (ILQGGWVPFAITAFFLIITLS) threads the bilayer. The Cytoplasmic segment spans residues 541–739 (WTYGRSKKGE…TLQVGMLYEI (199 aa)).

The protein belongs to the HAK/KUP transporter (TC 2.A.72.3) family.

The protein resides in the membrane. In terms of biological role, high-affinity potassium transporter. The protein is Potassium transporter 26 (HAK26) of Oryza sativa subsp. japonica (Rice).